We begin with the raw amino-acid sequence, 187 residues long: Large ribosomal subunit protein uL22 (187 aa).

It belongs to the universal ribosomal protein uL22 family.

The chain is Large ribosomal subunit protein uL22 (RPL17) from Theileria parva (East coast fever infection agent).